A 366-amino-acid chain; its full sequence is Peptide chain release factor 2 (366 aa).

Q251 is subject to N5-methylglutamine.

Belongs to the prokaryotic/mitochondrial release factor family. In terms of processing, methylated by PrmC. Methylation increases the termination efficiency of RF2.

It localises to the cytoplasm. Peptide chain release factor 2 directs the termination of translation in response to the peptide chain termination codons UGA and UAA. The sequence is that of Peptide chain release factor 2 (prfB) from Listeria monocytogenes serovar 1/2a (strain ATCC BAA-679 / EGD-e).